The sequence spans 569 residues: 4-hydroxy-7-methoxy-3-oxo-3,4-dihydro-2H-1,4-benzoxazin-2-yl glucoside beta-D-glucosidase 1b, chloroplastic (569 aa).

Residues Met1–Ala50 constitute a chloroplast transit peptide. A beta-D-glucoside contacts are provided by residues Gln92, His194, and Asn239–Glu240. Glu240 functions as the Proton donor in the catalytic mechanism. Cys259 and Cys265 are disulfide-bonded. A beta-D-glucoside-binding positions include Tyr383, Glu456, Trp504, Glu511 to Trp512, and Phe520. The Nucleophile role is filled by Glu456.

The protein belongs to the glycosyl hydrolase 1 family. In terms of assembly, homo- and heterohexamers. Expressed in young seedlings early after germination.

Its subcellular location is the plastid. It localises to the chloroplast. The enzyme catalyses Hydrolysis of terminal, non-reducing beta-D-glucosyl residues with release of beta-D-glucose.. The catalysed reaction is DIMBOA beta-D-glucoside + H2O = DIMBOA + D-glucose. It catalyses the reaction DIBOA beta-D-glucoside + H2O = DIBOA + D-glucose. Functionally, acts in defense of young plant parts against pests via the production of hydroxamic acids from hydroxamic acid glucosides. Enzymatic activity is highly correlated with plant growth. The preferred substrate is DIMBOA-beta-D-glucoside. This Triticum aestivum (Wheat) protein is 4-hydroxy-7-methoxy-3-oxo-3,4-dihydro-2H-1,4-benzoxazin-2-yl glucoside beta-D-glucosidase 1b, chloroplastic (GLU1B).